Consider the following 428-residue polypeptide: tRNA(Ile)-lysidine synthase (428 aa).

28–33 (SGGVDS) is an ATP binding site.

Belongs to the tRNA(Ile)-lysidine synthase family.

Its subcellular location is the cytoplasm. The enzyme catalyses cytidine(34) in tRNA(Ile2) + L-lysine + ATP = lysidine(34) in tRNA(Ile2) + AMP + diphosphate + H(+). Functionally, ligates lysine onto the cytidine present at position 34 of the AUA codon-specific tRNA(Ile) that contains the anticodon CAU, in an ATP-dependent manner. Cytidine is converted to lysidine, thus changing the amino acid specificity of the tRNA from methionine to isoleucine. This is tRNA(Ile)-lysidine synthase from Streptococcus pyogenes serotype M6 (strain ATCC BAA-946 / MGAS10394).